The chain runs to 285 residues: ATP phosphoribosyltransferase (285 aa).

Belongs to the ATP phosphoribosyltransferase family. Long subfamily. Mg(2+) is required as a cofactor.

It is found in the cytoplasm. The catalysed reaction is 1-(5-phospho-beta-D-ribosyl)-ATP + diphosphate = 5-phospho-alpha-D-ribose 1-diphosphate + ATP. It participates in amino-acid biosynthesis; L-histidine biosynthesis; L-histidine from 5-phospho-alpha-D-ribose 1-diphosphate: step 1/9. With respect to regulation, feedback inhibited by histidine. Functionally, catalyzes the condensation of ATP and 5-phosphoribose 1-diphosphate to form N'-(5'-phosphoribosyl)-ATP (PR-ATP). Has a crucial role in the pathway because the rate of histidine biosynthesis seems to be controlled primarily by regulation of HisG enzymatic activity. The protein is ATP phosphoribosyltransferase of Sulfolobus acidocaldarius (strain ATCC 33909 / DSM 639 / JCM 8929 / NBRC 15157 / NCIMB 11770).